The following is a 400-amino-acid chain: Phosphoglycerate kinase (400 aa).

Substrate contacts are provided by residues 21–23, R37, 60–63, R121, and R154; these read DFN and HLGR. Residues K204, E326, and 355–358 each bind ATP; that span reads GGDS.

The protein belongs to the phosphoglycerate kinase family. As to quaternary structure, monomer.

It is found in the cytoplasm. It catalyses the reaction (2R)-3-phosphoglycerate + ATP = (2R)-3-phospho-glyceroyl phosphate + ADP. Its pathway is carbohydrate degradation; glycolysis; pyruvate from D-glyceraldehyde 3-phosphate: step 2/5. The protein is Phosphoglycerate kinase of Chloroflexus aggregans (strain MD-66 / DSM 9485).